The following is a 330-amino-acid chain: Ketol-acid reductoisomerase (NADP(+)) (330 aa).

Residues 2–182 (ARMYYDADAN…GGTRAGILET (181 aa)) form the KARI N-terminal Rossmann domain. Residues 25–28 (YGSQ), Ser-51, Ser-53, and 83–86 (DEFQ) each bind NADP(+). The active site involves His-108. Gly-134 is an NADP(+) binding site. One can recognise a KARI C-terminal knotted domain in the interval 183–328 (SFREETETDL…KDLRAMFSWL (146 aa)). Positions 191, 195, 227, and 231 each coordinate Mg(2+). Ser-252 serves as a coordination point for substrate.

It belongs to the ketol-acid reductoisomerase family. Mg(2+) is required as a cofactor.

It catalyses the reaction (2R)-2,3-dihydroxy-3-methylbutanoate + NADP(+) = (2S)-2-acetolactate + NADPH + H(+). The catalysed reaction is (2R,3R)-2,3-dihydroxy-3-methylpentanoate + NADP(+) = (S)-2-ethyl-2-hydroxy-3-oxobutanoate + NADPH + H(+). Its pathway is amino-acid biosynthesis; L-isoleucine biosynthesis; L-isoleucine from 2-oxobutanoate: step 2/4. It participates in amino-acid biosynthesis; L-valine biosynthesis; L-valine from pyruvate: step 2/4. Involved in the biosynthesis of branched-chain amino acids (BCAA). Catalyzes an alkyl-migration followed by a ketol-acid reduction of (S)-2-acetolactate (S2AL) to yield (R)-2,3-dihydroxy-isovalerate. In the isomerase reaction, S2AL is rearranged via a Mg-dependent methyl migration to produce 3-hydroxy-3-methyl-2-ketobutyrate (HMKB). In the reductase reaction, this 2-ketoacid undergoes a metal-dependent reduction by NADPH to yield (R)-2,3-dihydroxy-isovalerate. This Synechococcus elongatus (strain ATCC 33912 / PCC 7942 / FACHB-805) (Anacystis nidulans R2) protein is Ketol-acid reductoisomerase (NADP(+)).